Reading from the N-terminus, the 401-residue chain is Chorismate synthase (401 aa).

Arg-40 and Arg-46 together coordinate NADP(+). FMN contacts are provided by residues 135–137 (RAS), 256–257 (QA), Gly-302, 317–321 (KPISS), and Arg-343.

It belongs to the chorismate synthase family. In terms of assembly, homotetramer. FMNH2 is required as a cofactor.

It catalyses the reaction 5-O-(1-carboxyvinyl)-3-phosphoshikimate = chorismate + phosphate. Its pathway is metabolic intermediate biosynthesis; chorismate biosynthesis; chorismate from D-erythrose 4-phosphate and phosphoenolpyruvate: step 7/7. Functionally, catalyzes the anti-1,4-elimination of the C-3 phosphate and the C-6 proR hydrogen from 5-enolpyruvylshikimate-3-phosphate (EPSP) to yield chorismate, which is the branch point compound that serves as the starting substrate for the three terminal pathways of aromatic amino acid biosynthesis. This reaction introduces a second double bond into the aromatic ring system. This chain is Chorismate synthase, found in Saccharopolyspora erythraea (strain ATCC 11635 / DSM 40517 / JCM 4748 / NBRC 13426 / NCIMB 8594 / NRRL 2338).